Consider the following 383-residue polypeptide: MAKRIKKTEEITKKFGDERKKALDDALKNIEKDFGKGAVMRLGERAEQKVQVMSSGSLALDIALGAGGYPKGRIVEIYGPESSGKTTVALHAVAQAQKDGGIAAFIDAEHALDPAYAAALGVNIDELLLSQPDSGEQGLEIAGKLIDSGAVDLVVVDSVAALVPRAEIDGDIGDSHVGLQARMMSQAMRKLSASINKTKTIAIFINQLREKVGIMFGNPETTPGGRALKFYSSVRLDVRGNTQIKGTGEQKDSNIGKETKIKVVKNKVAPPFKEAFVEIIYGEGISRTGELVKIASDLGIIQKAGAWYSYNGEKIGQGSENAKKFLADNPEIFDDIDHKVRVQYGLIEEDNTEEKQSSKEKETDEKADKNLVLELDDTIELED.

ATP is bound at residue 79-86 (GPESSGKT). A disordered region spans residues 347 to 369 (IEEDNTEEKQSSKEKETDEKADK). The segment covering 353-369 (EEKQSSKEKETDEKADK) has biased composition (basic and acidic residues).

It belongs to the RecA family.

It localises to the cytoplasm. In terms of biological role, can catalyze the hydrolysis of ATP in the presence of single-stranded DNA, the ATP-dependent uptake of single-stranded DNA by duplex DNA, and the ATP-dependent hybridization of homologous single-stranded DNAs. It interacts with LexA causing its activation and leading to its autocatalytic cleavage. The protein is Protein RecA of Streptococcus mutans serotype c (strain ATCC 700610 / UA159).